We begin with the raw amino-acid sequence, 267 residues long: 2-keto-3-deoxy-L-rhamnonate aldolase (267 aa).

The active-site Proton acceptor is the histidine 49. Glutamine 151 provides a ligand contact to substrate. Glutamate 153 serves as a coordination point for Mg(2+). Residues alanine 178 and aspartate 179 each contribute to the substrate site. Aspartate 179 lines the Mg(2+) pocket.

This sequence belongs to the HpcH/HpaI aldolase family. KDR aldolase subfamily. Homohexamer. Requires Mg(2+) as cofactor.

The catalysed reaction is 2-dehydro-3-deoxy-L-rhamnonate = (S)-lactaldehyde + pyruvate. Its function is as follows. Catalyzes the reversible retro-aldol cleavage of 2-keto-3-deoxy-L-rhamnonate (KDR) to pyruvate and lactaldehyde. This chain is 2-keto-3-deoxy-L-rhamnonate aldolase, found in Salmonella enteritidis PT4 (strain P125109).